The sequence spans 1294 residues: uncharacterized protein (1294 aa).

Residues 1 to 375 (MSQQENGDVA…RNFKLNFSDY (375 aa)) are Extracellular-facing. The region spanning 28 to 287 (LHVRDLSIVA…FESIGYHVPQ (260 aa)) is the ABC transporter 1 domain. Asparagine 41 carries an N-linked (GlcNAc...) asparagine glycan. Residue 62-69 (GGSGSGKT) coordinates ATP. N-linked (GlcNAc...) asparagine glycosylation is found at asparagine 86, asparagine 101, asparagine 151, asparagine 341, asparagine 349, and asparagine 371. A helical transmembrane segment spans residues 376-396 (VTLISTFAEPLIIGTVCGWIY). Over 397–495 (YKPDKSSIGG…EADARKFFYQ (99 aa)) the chain is Cytoplasmic. The chain crosses the membrane as a helical span at residues 496 to 516 (FAVVFLCQLSCSGLSMLSVAV). The Extracellular segment spans residues 517–530 (SRDFSKASLVGNMT). An N-linked (GlcNAc...) asparagine glycan is attached at asparagine 528. A helical transmembrane segment spans residues 531 to 551 (FTVLSMGCGFFVNAKVMPVYV). Residues 552-604 (RWIKYIAFTWYSFGTLMSSTFTNSYCTTDNLDECLGNQILEVYGFPRNWITVP) are Cytoplasmic-facing. A helical membrane pass occupies residues 605–625 (AVVLLCWSVGYFVVGAIILYL). Topologically, residues 626–1038 (HKIDITLQNE…TTTRRSFDSL (413 aa)) are extracellular. The 263-residue stretch at 679-941 (IKLEDIDLRV…FTELGYNCPS (263 aa)) folds into the ABC transporter 2 domain. Residue 727-734 (GPSGSGKS) coordinates ATP. The N-linked (GlcNAc...) asparagine glycan is linked to asparagine 983. Residues 1039 to 1059 (MARIAQIPGLGVIFALFFAPV) form a helical membrane-spanning segment. Topologically, residues 1060-1120 (KHNYTSISNR…PFFLAYMTLE (61 aa)) are cytoplasmic. The helical transmembrane segment at 1121 to 1141 (LPLSALASVLYAVFTVLACGL) threads the bilayer. Over 1142–1266 (PRTAGNFFAT…YGLVRNTQKY (125 aa)) the chain is Extracellular. A helical membrane pass occupies residues 1267-1287 (LGIIVCVAIIYRLIAFFILKA). Over 1288 to 1294 (KLEWIKW) the chain is Cytoplasmic.

This sequence belongs to the ABC transporter superfamily. ABCG family. PDR (TC 3.A.1.205) subfamily.

The protein resides in the membrane. This is an uncharacterized protein from Saccharomyces cerevisiae (strain ATCC 204508 / S288c) (Baker's yeast).